Reading from the N-terminus, the 311-residue chain is Putative S-adenosyl-L-methionine-dependent methyltransferase MMAR_0358 (311 aa).

Residues aspartate 132 and 161–162 (DL) each bind S-adenosyl-L-methionine.

It belongs to the UPF0677 family.

Functionally, exhibits S-adenosyl-L-methionine-dependent methyltransferase activity. The polypeptide is Putative S-adenosyl-L-methionine-dependent methyltransferase MMAR_0358 (Mycobacterium marinum (strain ATCC BAA-535 / M)).